A 454-amino-acid chain; its full sequence is Flavonoid 3-O-glucosyltransferase (454 aa).

Position 25 (T25) interacts with UDP. The active-site Proton acceptor is H26. Residue R89 participates in myricetin binding. D124 (charge relay) is an active-site residue. 3 residues coordinate myricetin: H155, E192, and F202. Positions 282, 308, 334, and 335 each coordinate UDP. Residues A335, Q337, H352, W355, N356, S357, and E360 each contribute to the UDP-alpha-D-glucose site. Residue H352 participates in UDP binding. N356, S357, and E360 together coordinate UDP. Position 375 (G375) interacts with myricetin. 2 residues coordinate UDP-alpha-D-glucose: D376 and Q377.

This sequence belongs to the UDP-glycosyltransferase family. As to expression, highly expressed in flower buds, flowers and pods. Lower expression in leaves, petioles and stems.

The protein operates within secondary metabolite biosynthesis; flavonoid biosynthesis. Its function is as follows. Catalyzes the glycosylation of flavonoids at the 3-O-position. Glycosylates the 7-O-position if the 3-O-position is not available. Also able to perform 3-O-glycosylation of anthocyanidins. The protein is Flavonoid 3-O-glucosyltransferase (UGT78G1) of Medicago truncatula (Barrel medic).